Consider the following 538-residue polypeptide: Syncytin-1 (538 aa).

The N-terminal stretch at 1-20 is a signal peptide; it reads MALPYHIFLFTVLLPSFTLT. Residues 21–443 are Extracellular-facing; that stretch reads APPPCRCMTS…NTGPWGLLSQ (423 aa). An N-linked (GlcNAc...) asparagine glycan is attached at Asn-169. The CXXC signature appears at 186-189; sequence CWIC. Intrachain disulfides connect Cys-186/Cys-189, Cys-186/Cys-405, and Cys-397/Cys-404. Residues Asn-208, Asn-214, Asn-234, Asn-242, and Asn-281 are each glycosylated (N-linked (GlcNAc...) asparagine). The tract at residues 320–340 is fusion peptide; it reads ILPFVIGAGVLGALGTGIGGI. An immunosuppression region spans residues 380–396; the sequence is LQNRRALDLLTAERGGT. The CX6CC motif lies at 397–406; the sequence is CLFLGEECCY. Residue Asn-409 is glycosylated (N-linked (GlcNAc...) asparagine). Residues 444–464 traverse the membrane as a helical segment; sequence WMPWILPFLGPLAAIILLLLF. The segment at 465 to 484 is essential for the fusiogenic function; sequence GPCIFNLLVNFVSSRIEAVK. The Cytoplasmic portion of the chain corresponds to 465–538; it reads GPCIFNLLVN…LLRPNSAGSS (74 aa). Positions 496 to 538 are disordered; the sequence is KIYRRPLDRPASPRSDVNDIKGTPPEEISAAQPLLRPNSAGSS.

Belongs to the gamma type-C retroviral envelope protein family. HERV class-I W env subfamily. In terms of assembly, the mature envelope protein (Env) consists of a trimer of SU-TM heterodimers attached probably by a labile interchain disulfide bond. Interacts with the C-type lectin CD209/DC-SIGN. In terms of processing, specific enzymatic cleavages in vivo yield mature proteins. Envelope glycoproteins are synthesized as an inactive precursor that is heavily N-glycosylated and processed likely by furin in the Golgi to yield the mature SU and TM proteins. The cleavage site between SU and TM requires the minimal sequence [KR]-X-[KR]-R. The intracytoplasmic tail cleavage by the viral protease that is required for the fusiogenic activity of some retroviruses envelope proteins seems to have been lost during evolution. Post-translationally, the CXXC motif is highly conserved across a broad range of retroviral envelope proteins. It is thought to participate in the formation of a labile disulfide bond possibly with the CX6CC motif present in the transmembrane protein. Isomerization of the intersubunit disulfide bond to an SU intrachain disulfide bond is thought to occur upon receptor recognition in order to allow membrane fusion. Expressed at higher level in placental syncytiotrophoblast. Expressed at intermediate level in testis. Seems also to be found at low level in adrenal tissue, bone marrow, breast, colon, kidney, ovary, prostate, skin, spleen, thymus, thyroid, brain and trachea. Both mRNA and protein levels are significantly increased in the brain of individuals with multiple sclerosis, particularly in astrocytes and microglia.

The protein localises to the cell membrane. It localises to the virion. In terms of biological role, this endogenous retroviral envelope protein has retained its original fusogenic properties and participates in trophoblast fusion and the formation of a syncytium during placenta morphogenesis. May induce fusion through binding of SLC1A4 and SLC1A5. Its function is as follows. Endogenous envelope proteins may have kept, lost or modified their original function during evolution. Retroviral envelope proteins mediate receptor recognition and membrane fusion during early infection. The surface protein (SU) mediates receptor recognition, while the transmembrane protein (TM) acts as a class I viral fusion protein. The protein may have at least 3 conformational states: pre-fusion native state, pre-hairpin intermediate state, and post-fusion hairpin state. During viral and target cell membrane fusion, the coiled coil regions (heptad repeats) assume a trimer-of-hairpins structure, positioning the fusion peptide in close proximity to the C-terminal region of the ectodomain. The formation of this structure appears to drive apposition and subsequent fusion of membranes. This is Syncytin-1 (ERVW-1) from Homo sapiens (Human).